The following is a 162-amino-acid chain: SsrA-binding protein (162 aa).

A compositionally biased stretch (basic and acidic residues) spans 137-154 (HDKREDTKAREWDREKAR). Positions 137 to 162 (HDKREDTKAREWDREKARIMKNKHRG) are disordered.

This sequence belongs to the SmpB family.

It localises to the cytoplasm. In terms of biological role, required for rescue of stalled ribosomes mediated by trans-translation. Binds to transfer-messenger RNA (tmRNA), required for stable association of tmRNA with ribosomes. tmRNA and SmpB together mimic tRNA shape, replacing the anticodon stem-loop with SmpB. tmRNA is encoded by the ssrA gene; the 2 termini fold to resemble tRNA(Ala) and it encodes a 'tag peptide', a short internal open reading frame. During trans-translation Ala-aminoacylated tmRNA acts like a tRNA, entering the A-site of stalled ribosomes, displacing the stalled mRNA. The ribosome then switches to translate the ORF on the tmRNA; the nascent peptide is terminated with the 'tag peptide' encoded by the tmRNA and targeted for degradation. The ribosome is freed to recommence translation, which seems to be the essential function of trans-translation. This chain is SsrA-binding protein, found in Aeromonas hydrophila subsp. hydrophila (strain ATCC 7966 / DSM 30187 / BCRC 13018 / CCUG 14551 / JCM 1027 / KCTC 2358 / NCIMB 9240 / NCTC 8049).